Reading from the N-terminus, the 304-residue chain is Dermonecrotic toxin LlSicTox-betaIA1 (304 aa).

The signal sequence occupies residues 1–21 (MLLSAVISFIGFAAFLQEANG). The propeptide occupies 22–26 (HVVER). Residue His-38 is part of the active site. Residues Glu-58 and Asp-60 each coordinate Mg(2+). His-74 functions as the Nucleophile in the catalytic mechanism. 2 cysteine pairs are disulfide-bonded: Cys-78/Cys-84 and Cys-80/Cys-223. Asp-118 provides a ligand contact to Mg(2+).

This sequence belongs to the arthropod phospholipase D family. Class II subfamily. Class IIb sub-subfamily. Mg(2+) is required as a cofactor. In terms of tissue distribution, expressed by the venom gland.

Its subcellular location is the secreted. It carries out the reaction an N-(acyl)-sphingosylphosphocholine = an N-(acyl)-sphingosyl-1,3-cyclic phosphate + choline. The catalysed reaction is an N-(acyl)-sphingosylphosphoethanolamine = an N-(acyl)-sphingosyl-1,3-cyclic phosphate + ethanolamine. The enzyme catalyses a 1-acyl-sn-glycero-3-phosphocholine = a 1-acyl-sn-glycero-2,3-cyclic phosphate + choline. It catalyses the reaction a 1-acyl-sn-glycero-3-phosphoethanolamine = a 1-acyl-sn-glycero-2,3-cyclic phosphate + ethanolamine. In terms of biological role, dermonecrotic toxins cleave the phosphodiester linkage between the phosphate and headgroup of certain phospholipids (sphingolipid and lysolipid substrates), forming an alcohol (often choline) and a cyclic phosphate. This toxin acts on sphingomyelin (SM) with low activity. It may also act on ceramide phosphoethanolamine (CPE), lysophosphatidylcholine (LPC) and lysophosphatidylethanolamine (LPE), but not on lysophosphatidylserine (LPS), and lysophosphatidylglycerol (LPG). It acts by transphosphatidylation, releasing exclusively cyclic phosphate products as second products. Induces hemolysis, dermonecrosis, and edema. Also induces platelet aggregation. This chain is Dermonecrotic toxin LlSicTox-betaIA1, found in Loxosceles laeta (South American recluse spider).